A 409-amino-acid polypeptide reads, in one-letter code: MLNSRVVDTPPRTSRRIKLSLMGPAFIAAIGYIDPGNFATNIQAGASFGYTLLWVVVWANFMAMLIQLLSAKLGIATGKNLAEHIRDRFPRPAVWAYWVQAEIIAMATDLAEFIGAAIGFKLLLGVTLLEGAVLTGIATFLILMLQKRGQKPLELVIGGLLLFVAAAYIVELVFSRPEIAALGRGMLIPDLPNRDAVFLAAGVLGATIMPHVIYLHSSLTQTAGENSKADRYASTKLDVAIAMTIAGFVNLAMMATAAAAFHFNGYGSIAEIEQAYLTLQPLLGNAAATIFGLSLVAAGLSSTVVGTLAGQVVMQGFVRFYIPIWVRRTVTMLPSFIVILMGMDATRILVMSQVLLSFGIALALVPLLAFTGNKELMGDMVNSKLIQILGKLIVLVVIGLNAYLLVSLI.

Helical transmembrane passes span 19–39 (LSLM…GNFA), 46–66 (ASFG…AMLI), 98–118 (WVQA…GAAI), 122–142 (LLLG…TFLI), 155–175 (LVIG…LVFS), 196–216 (AVFL…IYLH), 241–261 (IAMT…AAAF), 290–310 (IFGL…TLAG), 320–340 (FYIP…IVIL), 348–368 (ILVM…VPLL), and 388–408 (ILGK…LVSL).

The protein belongs to the NRAMP family.

It localises to the cell inner membrane. In terms of biological role, h(+)-stimulated, divalent metal cation uptake system. The polypeptide is Divalent metal cation transporter MntH (Yersinia enterocolitica serotype O:8 / biotype 1B (strain NCTC 13174 / 8081)).